Here is a 148-residue protein sequence, read N- to C-terminus: 15 kDa excretory/secretory protein (148 aa).

A signal peptide spans 1–19 (MFFAFAVLLIALATREAYG).

To T.colubriformis 30 kDa antigenic glycoprotein.

Its subcellular location is the secreted. This chain is 15 kDa excretory/secretory protein, found in Haemonchus contortus (Barber pole worm).